Consider the following 315-residue polypeptide: Methionyl-tRNA formyltransferase (315 aa).

Residue 113–116 participates in (6S)-5,6,7,8-tetrahydrofolate binding; sequence SLLP.

This sequence belongs to the Fmt family.

It carries out the reaction L-methionyl-tRNA(fMet) + (6R)-10-formyltetrahydrofolate = N-formyl-L-methionyl-tRNA(fMet) + (6S)-5,6,7,8-tetrahydrofolate + H(+). Its function is as follows. Attaches a formyl group to the free amino group of methionyl-tRNA(fMet). The formyl group appears to play a dual role in the initiator identity of N-formylmethionyl-tRNA by promoting its recognition by IF2 and preventing the misappropriation of this tRNA by the elongation apparatus. This is Methionyl-tRNA formyltransferase from Salmonella gallinarum (strain 287/91 / NCTC 13346).